The sequence spans 791 residues: Genome polyprotein (791 aa).

Residues 1–15 (MNNQRKKTGRPSFNM) are interaction with host EXOC1. Residues 1–101 (MNNQRKKTGR…LNIMNRRKRS (101 aa)) lie on the Cytoplasmic side of the membrane. The interval 37–72 (LLSGQGPMKLVMAFIAFLRFLAIPPTAGILARWSSF) is hydrophobic; homodimerization of capsid protein C. Residues 101–114 (SVTMLLMLLPTALA) constitute a propeptide, ER anchor for the capsid protein C, removed in mature form by serine protease NS3. Residues 102–119 (VTMLLMLLPTALAFHLTT) form a helical membrane-spanning segment. The Extracellular portion of the chain corresponds to 120 to 242 (RGGEPTLIVS…QIQKVETWAL (123 aa)). An N-linked (GlcNAc...) asparagine; by host glycan is attached at Asn-183. A helical membrane pass occupies residues 243 to 260 (RHPGFTVIGLFLAHAIGT). Ser-261 is a topological domain (cytoplasmic). A helical transmembrane segment spans residues 262–280 (ITQKGIIFILLMLVTPSMA). Over 281-725 (MRCVGIGNRD…IHQIFGTAYG (445 aa)) the chain is Extracellular. 4 disulfide bridges follow: Cys-283-Cys-310, Cys-340-Cys-401, Cys-354-Cys-385, and Cys-372-Cys-396. The N-linked (GlcNAc...) asparagine; by host glycan is linked to Asn-347. A fusion peptide region spans residues 378–391 (DRGWGNGCGLFGKG). The N-linked (GlcNAc...) asparagine; by host glycan is linked to Asn-433. Cystine bridges form between Cys-465/Cys-565 and Cys-582/Cys-613. The chain crosses the membrane as a helical span at residues 726–746 (ILFSGVSWTMKIGIGILLTWL). Residues 747–752 (GLNSRS) lie on the Cytoplasmic side of the membrane. The helical transmembrane segment at 753–775 (TSLSMTCIAVGMVTLYLGVMVQA) threads the bilayer. At 776–791 (DSGCVINWKGKELKCG) the chain is on the extracellular side. A disulfide bridge connects residues Cys-779 and Cys-790.

Homodimer. Interacts (via N-terminus) with host EXOC1 (via C-terminus); this interaction results in EXOC1 degradation through the proteasome degradation pathway. In terms of assembly, forms heterodimers with envelope protein E in the endoplasmic reticulum and Golgi. As to quaternary structure, homodimer; in the endoplasmic reticulum and Golgi. Interacts with protein prM. Interacts with non-structural protein 1. Homodimer; Homohexamer when secreted. Interacts with envelope protein E. Post-translationally, specific enzymatic cleavages in vivo yield mature proteins. Cleavages in the lumen of endoplasmic reticulum are performed by host signal peptidase, wereas cleavages in the cytoplasmic side are performed by serine protease NS3. Signal cleavage at the 2K-4B site requires a prior NS3 protease-mediated cleavage at the 4A-2K site. In terms of processing, N-glycosylated. N-glycosylated. The excreted form is glycosylated and this is required for efficient secretion of the protein from infected cells.

It localises to the virion. The protein localises to the host nucleus. It is found in the host cytoplasm. The protein resides in the host perinuclear region. Its subcellular location is the secreted. It localises to the virion membrane. The protein localises to the host endoplasmic reticulum membrane. Functionally, plays a role in virus budding by binding to the cell membrane and gathering the viral RNA into a nucleocapsid that forms the core of a mature virus particle. During virus entry, may induce genome penetration into the host cytoplasm after hemifusion induced by the surface proteins. Can migrate to the cell nucleus where it modulates host functions. Overcomes the anti-viral effects of host EXOC1 by sequestering and degrading the latter through the proteasome degradation pathway. Its function is as follows. Inhibits RNA silencing by interfering with host Dicer. Prevents premature fusion activity of envelope proteins in trans-Golgi by binding to envelope protein E at pH6.0. After virion release in extracellular space, gets dissociated from E dimers. In terms of biological role, acts as a chaperone for envelope protein E during intracellular virion assembly by masking and inactivating envelope protein E fusion peptide. prM is the only viral peptide matured by host furin in the trans-Golgi network probably to avoid catastrophic activation of the viral fusion activity in acidic GolGi compartment prior to virion release. prM-E cleavage is inefficient, and many virions are only partially matured. These uncleaved prM would play a role in immune evasion. Functionally, may play a role in virus budding. Exerts cytotoxic effects by activating a mitochondrial apoptotic pathway through M ectodomain. May display a viroporin activity. Its function is as follows. Binds to host cell surface receptor and mediates fusion between viral and cellular membranes. Envelope protein is synthesized in the endoplasmic reticulum in the form of heterodimer with protein prM. They play a role in virion budding in the ER, and the newly formed immature particle is covered with 60 spikes composed of heterodimer between precursor prM and envelope protein E. The virion is transported to the Golgi apparatus where the low pH causes dissociation of PrM-E heterodimers and formation of E homodimers. prM-E cleavage is inefficient, and many virions are only partially matured. These uncleaved prM would play a role in immune evasion. Involved in immune evasion, pathogenesis and viral replication. Once cleaved off the polyprotein, is targeted to three destinations: the viral replication cycle, the plasma membrane and the extracellular compartment. Essential for viral replication. Required for formation of the replication complex and recruitment of other non-structural proteins to the ER-derived membrane structures. Excreted as a hexameric lipoparticle that plays a role against host immune response. Antagonizing the complement function. Binds to the host macrophages and dendritic cells. Inhibits signal transduction originating from Toll-like receptor 3 (TLR3). In terms of biological role, disrupts the host endothelial glycocalyx layer of host pulmonary microvascular endothelial cells, inducing degradation of sialic acid and shedding of heparan sulfate proteoglycans. NS1 induces expression of sialidases, heparanase, and activates cathepsin L, which activates heparanase via enzymatic cleavage. These effects are probably linked to the endothelial hyperpermeability observed in severe dengue disease. This chain is Genome polyprotein, found in Dengue virus type 1 (strain Jamaica/CV1636/1977) (DENV-1).